A 397-amino-acid chain; its full sequence is Tyrosine--tRNA ligase (397 aa).

A 'HIGH' region motif is present at residues Pro39 to His48. Positions Lys223–Ser227 match the 'KMSKS' region motif. Residue Lys226 coordinates ATP. Residues Tyr334 to Leu395 form the S4 RNA-binding domain.

It belongs to the class-I aminoacyl-tRNA synthetase family. TyrS type 2 subfamily. In terms of assembly, homodimer.

The protein resides in the cytoplasm. It carries out the reaction tRNA(Tyr) + L-tyrosine + ATP = L-tyrosyl-tRNA(Tyr) + AMP + diphosphate + H(+). Catalyzes the attachment of tyrosine to tRNA(Tyr) in a two-step reaction: tyrosine is first activated by ATP to form Tyr-AMP and then transferred to the acceptor end of tRNA(Tyr). The protein is Tyrosine--tRNA ligase of Methylococcus capsulatus (strain ATCC 33009 / NCIMB 11132 / Bath).